A 100-amino-acid polypeptide reads, in one-letter code: Small ribosomal subunit protein uS14c (100 aa).

This sequence belongs to the universal ribosomal protein uS14 family. In terms of assembly, part of the 30S ribosomal subunit.

It localises to the plastid. In terms of biological role, binds 16S rRNA, required for the assembly of 30S particles. This is Small ribosomal subunit protein uS14c from Euglena longa (Euglenophycean alga).